Here is a 379-residue protein sequence, read N- to C-terminus: Type II methyltransferase M.SsoII (379 aa).

One can recognise an HTH cro/C1-type domain in the interval 9–66 (IKEKRERLHMTQKEFADALGLSKYGDRTIRRWERGETKPTGAELKAVIDFPDTPPYPN). One can recognise an SAM-dependent MTase C5-type domain in the interval 72-379 (YRMIDLFAGI…AEKIISTLDS (308 aa)). The active site involves Cys142.

The protein belongs to the class I-like SAM-binding methyltransferase superfamily. C5-methyltransferase family.

It carries out the reaction a 2'-deoxycytidine in DNA + S-adenosyl-L-methionine = a 5-methyl-2'-deoxycytidine in DNA + S-adenosyl-L-homocysteine + H(+). Its function is as follows. A methylase that recognizes the double-stranded sequence 5'-CCNGG-3', methylates C-2 on both strands, and protects the DNA from cleavage by the SsoII endonuclease. This chain is Type II methyltransferase M.SsoII (ssoIIM), found in Shigella sonnei.